We begin with the raw amino-acid sequence, 217 residues long: Ribonuclease HII (217 aa).

The RNase H type-2 domain occupies 25–215; that stretch reads KLIAGVDESG…VKHVISDINR (191 aa). 3 residues coordinate a divalent metal cation: D31, E32, and D123.

Belongs to the RNase HII family. Mn(2+) is required as a cofactor. It depends on Mg(2+) as a cofactor.

The protein localises to the cytoplasm. It carries out the reaction Endonucleolytic cleavage to 5'-phosphomonoester.. In terms of biological role, endonuclease that specifically degrades the RNA of RNA-DNA hybrids. The protein is Ribonuclease HII of Blochmanniella pennsylvanica (strain BPEN).